Reading from the N-terminus, the 214-residue chain is Leucyl/phenylalanyl-tRNA--protein transferase (214 aa).

The segment at 194–214 is disordered; the sequence is FAPPGYSPDPASVVQRSSQTS.

Belongs to the L/F-transferase family.

It is found in the cytoplasm. The enzyme catalyses N-terminal L-lysyl-[protein] + L-leucyl-tRNA(Leu) = N-terminal L-leucyl-L-lysyl-[protein] + tRNA(Leu) + H(+). It carries out the reaction N-terminal L-arginyl-[protein] + L-leucyl-tRNA(Leu) = N-terminal L-leucyl-L-arginyl-[protein] + tRNA(Leu) + H(+). It catalyses the reaction L-phenylalanyl-tRNA(Phe) + an N-terminal L-alpha-aminoacyl-[protein] = an N-terminal L-phenylalanyl-L-alpha-aminoacyl-[protein] + tRNA(Phe). Functions in the N-end rule pathway of protein degradation where it conjugates Leu, Phe and, less efficiently, Met from aminoacyl-tRNAs to the N-termini of proteins containing an N-terminal arginine or lysine. The chain is Leucyl/phenylalanyl-tRNA--protein transferase from Cereibacter sphaeroides (strain ATCC 17025 / ATH 2.4.3) (Rhodobacter sphaeroides).